The sequence spans 385 residues: tRNA-specific 2-thiouridylase MnmA (385 aa).

ATP-binding positions include 29–36 (GLSGGVDS) and L55. Residue C116 is the Nucleophile of the active site. C116 and C225 form a disulfide bridge. An ATP-binding site is contributed by G141. Positions 175–177 (KDQ) are interaction with tRNA. C225 acts as the Cysteine persulfide intermediate in catalysis. An interaction with tRNA region spans residues 330 to 331 (RY).

Belongs to the MnmA/TRMU family.

The protein resides in the cytoplasm. The enzyme catalyses S-sulfanyl-L-cysteinyl-[protein] + uridine(34) in tRNA + AH2 + ATP = 2-thiouridine(34) in tRNA + L-cysteinyl-[protein] + A + AMP + diphosphate + H(+). Functionally, catalyzes the 2-thiolation of uridine at the wobble position (U34) of tRNA, leading to the formation of s(2)U34. This Prochlorococcus marinus (strain AS9601) protein is tRNA-specific 2-thiouridylase MnmA.